We begin with the raw amino-acid sequence, 400 residues long: Capsid protein (400 aa).

The span at 1 to 10 (MDPNLDQDTL) shows a compositional bias: polar residues. The tract at residues 1 to 54 (MDPNLDQDTLPTHEEIDNDVDSAEEEPPEPPLLPDDIDDDDSHGSRTRRQVKPP) is disordered. A compositionally biased stretch (acidic residues) spans 16–28 (IDNDVDSAEEEPP).

This sequence belongs to the potexvirus capsid protein family.

It is found in the virion. Its function is as follows. Required for genome encapsidation. This chain is Capsid protein (ORF3), found in Botryotinia fuckeliana (Noble rot fungus).